A 246-amino-acid polypeptide reads, in one-letter code: Mediator of RNA polymerase II transcription subunit 6 (246 aa).

Positions 193–246 (VQLKPGEKPVPVDQTKKEAEPIPETVKPEEKETTKNVQQTVSAKGPPEKRMRLQ) are disordered. Residues 206-226 (QTKKEAEPIPETVKPEEKETT) show a composition bias toward basic and acidic residues. Residue lysine 208 forms a Glycyl lysine isopeptide (Lys-Gly) (interchain with G-Cter in SUMO2) linkage. An N6-acetyllysine mark is found at lysine 236 and lysine 241.

It belongs to the Mediator complex subunit 6 family. As to quaternary structure, component of the Mediator complex, which is composed of MED1, MED4, MED6, MED7, MED8, MED9, MED10, MED11, MED12, MED13, MED13L, MED14, MED15, MED16, MED17, MED18, MED19, MED20, MED21, MED22, MED23, MED24, MED25, MED26, MED27, MED29, MED30, MED31, CCNC, CDK8 and CDC2L6/CDK11. The MED12, MED13, CCNC and CDK8 subunits form a distinct module termed the CDK8 module. Mediator containing the CDK8 module is less active than Mediator lacking this module in supporting transcriptional activation. Individual preparations of the Mediator complex lacking one or more distinct subunits have been variously termed ARC, CRSP, DRIP, PC2, SMCC and TRAP. Interacts with CTNNB1 and GLI3.

The protein localises to the nucleus. Component of the Mediator complex, a coactivator involved in the regulated transcription of nearly all RNA polymerase II-dependent genes. Mediator functions as a bridge to convey information from gene-specific regulatory proteins to the basal RNA polymerase II transcription machinery. Mediator is recruited to promoters by direct interactions with regulatory proteins and serves as a scaffold for the assembly of a functional preinitiation complex with RNA polymerase II and the general transcription factors. This is Mediator of RNA polymerase II transcription subunit 6 (MED6) from Homo sapiens (Human).